Reading from the N-terminus, the 254-residue chain is Putative hydro-lyase SACE_1553 (254 aa).

It belongs to the D-glutamate cyclase family.

The polypeptide is Putative hydro-lyase SACE_1553 (Saccharopolyspora erythraea (strain ATCC 11635 / DSM 40517 / JCM 4748 / NBRC 13426 / NCIMB 8594 / NRRL 2338)).